The primary structure comprises 68 residues: Large ribosomal subunit protein bL31 (68 aa).

4 residues coordinate Zn(2+): Cys-16, Cys-18, Cys-37, and Cys-40.

The protein belongs to the bacterial ribosomal protein bL31 family. Type A subfamily. Part of the 50S ribosomal subunit. Requires Zn(2+) as cofactor.

Its function is as follows. Binds the 23S rRNA. The polypeptide is Large ribosomal subunit protein bL31 (Acidithiobacillus ferrooxidans (strain ATCC 23270 / DSM 14882 / CIP 104768 / NCIMB 8455) (Ferrobacillus ferrooxidans (strain ATCC 23270))).